A 250-amino-acid polypeptide reads, in one-letter code: 5-oxoprolinase subunit A (250 aa).

Belongs to the LamB/PxpA family. Forms a complex composed of PxpA, PxpB and PxpC.

The enzyme catalyses 5-oxo-L-proline + ATP + 2 H2O = L-glutamate + ADP + phosphate + H(+). In terms of biological role, catalyzes the cleavage of 5-oxoproline to form L-glutamate coupled to the hydrolysis of ATP to ADP and inorganic phosphate. The sequence is that of 5-oxoprolinase subunit A from Staphylococcus aureus (strain bovine RF122 / ET3-1).